The following is a 408-amino-acid chain: LL-diaminopimelate aminotransferase (408 aa).

Substrate-binding residues include Tyr15 and Gly42. Residues Tyr72, 108-109 (SK), Tyr132, Asn187, Tyr218, and 246-248 (SFS) each bind pyridoxal 5'-phosphate. Substrate is bound by residues Lys109, Tyr132, and Asn187. The residue at position 249 (Lys249) is an N6-(pyridoxal phosphate)lysine. Residues Arg257 and Asn292 each contribute to the pyridoxal 5'-phosphate site. Substrate contacts are provided by Asn292 and Arg388.

Belongs to the class-I pyridoxal-phosphate-dependent aminotransferase family. LL-diaminopimelate aminotransferase subfamily. As to quaternary structure, homodimer. The cofactor is pyridoxal 5'-phosphate.

The enzyme catalyses (2S,6S)-2,6-diaminopimelate + 2-oxoglutarate = (S)-2,3,4,5-tetrahydrodipicolinate + L-glutamate + H2O + H(+). Its pathway is amino-acid biosynthesis; L-lysine biosynthesis via DAP pathway; LL-2,6-diaminopimelate from (S)-tetrahydrodipicolinate (aminotransferase route): step 1/1. Involved in the synthesis of meso-diaminopimelate (m-DAP or DL-DAP), required for both lysine and peptidoglycan biosynthesis. Catalyzes the direct conversion of tetrahydrodipicolinate to LL-diaminopimelate. The chain is LL-diaminopimelate aminotransferase from Prochlorococcus marinus (strain MIT 9313).